The primary structure comprises 347 residues: Dihydroorotase (347 aa).

2 residues coordinate Zn(2+): histidine 14 and histidine 16. Residues 16 to 18 (HLR) and asparagine 42 contribute to the substrate site. The Zn(2+) site is built by lysine 100, histidine 137, and histidine 175. Lysine 100 is modified (N6-carboxylysine). Histidine 137 is a binding site for substrate. Leucine 220 serves as a coordination point for substrate. Aspartate 248 contacts Zn(2+). Aspartate 248 is an active-site residue. Residues histidine 252 and alanine 264 each contribute to the substrate site.

It belongs to the metallo-dependent hydrolases superfamily. DHOase family. Class II DHOase subfamily. As to quaternary structure, homodimer. Requires Zn(2+) as cofactor.

The enzyme catalyses (S)-dihydroorotate + H2O = N-carbamoyl-L-aspartate + H(+). The protein operates within pyrimidine metabolism; UMP biosynthesis via de novo pathway; (S)-dihydroorotate from bicarbonate: step 3/3. Functionally, catalyzes the reversible cyclization of carbamoyl aspartate to dihydroorotate. The protein is Dihydroorotase of Pseudomonas syringae pv. syringae (strain B728a).